The following is a 148-amino-acid chain: WAP four-disulfide core domain protein 12 (148 aa).

Residues 1-23 form the signal peptide; it reads MRSYSFWFLTAFLVFATLALGEA. The WAP domain occupies 27-74; it reads GKEKWGNCPAEKGSCIKSGPSQCHADNDCPGDKKCCFLSCSFKCVSPD. 4 disulfide bridges follow: cysteine 34–cysteine 62, cysteine 41–cysteine 66, cysteine 49–cysteine 61, and cysteine 55–cysteine 70. The interval 74-148 is disordered; it reads DRIRKEGGNE…QEASPQKEWS (75 aa).

It localises to the secreted. Its function is as follows. Antibacterial protein. Putative acid-stable proteinase inhibitor. This chain is WAP four-disulfide core domain protein 12 (WFDC12), found in Lemur catta (Ring-tailed lemur).